Consider the following 412-residue polypeptide: GATOR complex protein NPRL2 (412 aa).

It belongs to the NPR2 family. Component of the GATOR complex consisting of mio, Nup44A/Seh1, Im11, Nplr3, Nplr2, Wdr24, Wdr59 and Sec13. Within the GATOR complex, probable component of the GATOR1 subcomplex which is likely composed of Iml1, Nplr2 and Nplr3. Interacts with Nprl3.

The protein resides in the cytoplasm. It is found in the lysosome. An essential component of the GATOR subcomplex GATOR1 which functions as an inhibitor of the amino acid-sensing branch of the TORC1 signaling pathway. The two GATOR subcomplexes, GATOR1 and GATOR2, regulate the TORC1 pathway in order to mediate metabolic homeostasis, female gametogenesis and the response to amino acid limitation and complete starvation. The function of GATOR1 in negatively regulating the TORC1 pathway is essential for maintaining baseline levels of TORC1 activity under nutrient rich conditions, and for promoting survival during amino acid or complete starvation by inhibiting TORC1-dependent cell growth and promoting catabolic metabolism and autophagy. In addition, this inhibition of TORC1 is necessary to maintain female fertility under normal conditions and during periods of nutrient stress. GATOR1 and GATOR2 act at different stages of oogenesis to regulate TORC1 in order to control meiotic entry and promote oocyte growth and development. After exactly four mitotic cyst divisions, the GATOR1 complex members (Iml1, Nprl2 and Nprl3) down-regulate TORC1 to slow cellular metabolism and promote the mitotic/meiotic transition. At later stages of oogenesis, the mio and Nup44A components of the GATOR2 complex inhibit GATOR1 and thus activate TORC1 to promote meiotic progression, and drive oocyte growth and development. The sequence is that of GATOR complex protein NPRL2 from Drosophila melanogaster (Fruit fly).